The sequence spans 180 residues: Large ribosomal subunit protein uL5 (180 aa).

Belongs to the universal ribosomal protein uL5 family. As to quaternary structure, part of the 50S ribosomal subunit; part of the 5S rRNA/L5/L18/L25 subcomplex. Contacts the 5S rRNA and the P site tRNA. Forms a bridge to the 30S subunit in the 70S ribosome.

Its function is as follows. This is one of the proteins that bind and probably mediate the attachment of the 5S RNA into the large ribosomal subunit, where it forms part of the central protuberance. In the 70S ribosome it contacts protein S13 of the 30S subunit (bridge B1b), connecting the 2 subunits; this bridge is implicated in subunit movement. Contacts the P site tRNA; the 5S rRNA and some of its associated proteins might help stabilize positioning of ribosome-bound tRNAs. This chain is Large ribosomal subunit protein uL5, found in Ruminiclostridium cellulolyticum (strain ATCC 35319 / DSM 5812 / JCM 6584 / H10) (Clostridium cellulolyticum).